Reading from the N-terminus, the 710-residue chain is E3 ubiquitin-protein ligase TRIM9 (710 aa).

Residues 10–50 (CPVCGSFYREPIILPCSHNICQACARNILVQTPESESPQSR) form an RING-type zinc finger. A Phosphothreonine modification is found at threonine 41. Phosphoserine is present on residues serine 44, serine 46, serine 49, and serine 53. 2 consecutive B box-type zinc fingers follow at residues 163–212 (AAAL…LVPP) and 224–266 (RKVS…VKAL). Residues cysteine 168, cysteine 171, cysteine 193, histidine 198, cysteine 229, histidine 232, cysteine 252, and histidine 258 each coordinate Zn(2+). Residues 273 to 340 (HKSQLSQALN…KAQLLARVNK (68 aa)) are a coiled coil. Positions 374 to 432 (IKENDPSGFLQISDALIRRVHLTEDQWGKGTLTPRMTTDFDLSLDNSPLLQSIHQLDFV) constitute a COS domain. One can recognise a Fibronectin type-III domain in the interval 440 to 535 (VPATPILQLE…KTLVLQTSEV (96 aa)). The B30.2/SPRY domain occupies 533-702 (SEVAWFAFDP…LHTGLQVPDF (170 aa)).

Belongs to the TRIM/RBCC family. In terms of assembly, interacts with SNAP25. Post-translationally, auto-ubiquitinated.

The protein resides in the cytoplasm. It localises to the cell projection. Its subcellular location is the dendrite. The protein localises to the cytoplasmic vesicle. It is found in the secretory vesicle. The protein resides in the synaptic vesicle. It localises to the synapse. Its subcellular location is the cytoskeleton. The enzyme catalyses S-ubiquitinyl-[E2 ubiquitin-conjugating enzyme]-L-cysteine + [acceptor protein]-L-lysine = [E2 ubiquitin-conjugating enzyme]-L-cysteine + N(6)-ubiquitinyl-[acceptor protein]-L-lysine.. The protein operates within protein modification; protein ubiquitination. Functionally, E3 ubiquitin-protein ligase which ubiquitinates itself in cooperation with an E2 enzyme UBE2D2/UBC4 and serves as a targeting signal for proteasomal degradation. May play a role in regulation of neuronal functions. May act as a regulator of synaptic vesicle exocytosis by controlling the availability of SNAP25 for the SNARE complex formation. The sequence is that of E3 ubiquitin-protein ligase TRIM9 (TRIM9) from Bos taurus (Bovine).